The sequence spans 165 residues: Anaerobic nitrite reductase GLB1 (165 aa).

In terms of domain architecture, Globin spans 12-162 (VFGEEQEALV…LVAAIKREMK (151 aa)). A Homodimerization motif is present at residues 45–49 (EIAPS). Heme b contacts are provided by Ser-55, Lys-69, His-73, Arg-103, Thr-107, and His-108. The Homodimerization motif lies at 115-127 (DGHFEVTGFALLE).

It belongs to the plant globin family. In terms of assembly, homodimer. It depends on heme b as a cofactor. In vegetative but not in embryonic organs.

The protein resides in the cytoplasm. The protein localises to the nucleus. The catalysed reaction is Fe(III)-heme b-[protein] + nitric oxide + H2O = Fe(II)-heme b-[protein] + nitrite + 2 H(+). Functionally, phytoglobin that reduces nitrite to nitric oxide (NO) under anoxic conditions (e.g. during flooding or in waterlogged soil). May not function as an oxygen storage or transport protein. Has an unusually high affinity for O(2) through an hexacoordinate heme iron because of a very low dissociation constant. The polypeptide is Anaerobic nitrite reductase GLB1 (HB) (Zea mays subsp. parviglumis (Balsas teosinte)).